A 546-amino-acid chain; its full sequence is Chaperonin GroEL 1 (546 aa).

ATP is bound by residues 30–33 (TLGP), Lys-51, 87–91 (DGTTT), Gly-415, 479–481 (NAA), and Asp-495.

It belongs to the chaperonin (HSP60) family. In terms of assembly, forms a cylinder of 14 subunits composed of two heptameric rings stacked back-to-back. Interacts with the co-chaperonin GroES.

Its subcellular location is the cytoplasm. It carries out the reaction ATP + H2O + a folded polypeptide = ADP + phosphate + an unfolded polypeptide.. Its function is as follows. Together with its co-chaperonin GroES, plays an essential role in assisting protein folding. The GroEL-GroES system forms a nano-cage that allows encapsulation of the non-native substrate proteins and provides a physical environment optimized to promote and accelerate protein folding. The polypeptide is Chaperonin GroEL 1 (Paraburkholderia xenovorans (strain LB400)).